The following is a 286-amino-acid chain: Protein FAM87A (286 aa).

The next 2 helical transmembrane spans lie at 68 to 88 (YLHS…ETAL) and 161 to 181 (SFFV…GDML).

This sequence belongs to the FAM87 family.

The protein resides in the membrane. The chain is Protein FAM87A (FAM87A) from Homo sapiens (Human).